The following is a 63-amino-acid chain: Large ribosomal subunit protein uL29 (63 aa).

This sequence belongs to the universal ribosomal protein uL29 family.

The chain is Large ribosomal subunit protein uL29 from Bordetella avium (strain 197N).